Here is a 416-residue protein sequence, read N- to C-terminus: Neurotensin receptor type 2 (416 aa).

The Extracellular segment spans residues 1–32; sequence METSSLWPPRPSPSAGLSLEARLGVDTRLWAK. The chain crosses the membrane as a helical span at residues 33–55; sequence VLFTALYSLIFALGTAGNALSVH. Residues 56–64 are Cytoplasmic-facing; sequence VVLKARAGR. The helical transmembrane segment at 65-87 threads the bilayer; it reads PGRLRYHVLSLALSALLLLLISV. Topologically, residues 88 to 109 are extracellular; sequence PMELYNFVWSHYPWVFGDLGCR. The cysteines at positions 108 and 194 are disulfide-linked. The chain crosses the membrane as a helical span at residues 110–131; that stretch reads GYYFVRELCAYATVLSVASLSA. Residues 132–154 are Cytoplasmic-facing; the sequence is ERCLAVCQPLRARRLLTPRRTRR. The chain crosses the membrane as a helical span at residues 155-176; the sequence is LLSLVWVASLGLALPMAVIMGQ. Topologically, residues 177 to 217 are extracellular; the sequence is KHEMERADGEPEPASRVCTVLVSRATLQVFIQVNVLVSFVL. Residues 218–237 traverse the membrane as a helical segment; the sequence is PLALTAFLNGITVNHLVALY. Residues 238-297 are Cytoplasmic-facing; the sequence is SQVPSASAQVNSIPSRLELLSEEGLLGFITWRKTLSLGVQASLVRHKDASQIRSLQHSAQ. The helical transmembrane segment at 298–318 threads the bilayer; that stretch reads VLRAIVAVYVICWLPYHARRL. At 319-337 the chain is on the extracellular side; sequence MYCYIPDDGWTDELYDFYH. A helical membrane pass occupies residues 338-358; sequence YFYMVTNTLFYVSSAVTPVLY. Residues 359–416 are Cytoplasmic-facing; it reads NAVSSSFRKLFLESLSSLCGEQRSVVPLPQEAPESTTSTYSFRLWGSPRNPSLGEIQV. Residue cysteine 377 is the site of S-palmitoyl cysteine attachment. The residue at position 410 (serine 410) is a Phosphoserine.

This sequence belongs to the G-protein coupled receptor 1 family. Neurotensin receptor subfamily. NTSR2 sub-subfamily. Expressed maximally in the cerebellum, hippocampus, piriform cortex and neocortex of adult brain.

It is found in the cell membrane. Functionally, receptor for the tridecapeptide neurotensin. It is associated with G proteins that activate a phosphatidylinositol-calcium second messenger system. The polypeptide is Neurotensin receptor type 2 (Ntsr2) (Mus musculus (Mouse)).